The following is a 371-amino-acid chain: Alanine racemase (371 aa).

Residue Lys-40 is the Proton acceptor; specific for D-alanine of the active site. The residue at position 40 (Lys-40) is an N6-(pyridoxal phosphate)lysine. Arg-136 contacts substrate. Residue Tyr-263 is the Proton acceptor; specific for L-alanine of the active site. Residue Met-310 participates in substrate binding.

The protein belongs to the alanine racemase family. Pyridoxal 5'-phosphate is required as a cofactor.

It catalyses the reaction L-alanine = D-alanine. It functions in the pathway amino-acid biosynthesis; D-alanine biosynthesis; D-alanine from L-alanine: step 1/1. Functionally, catalyzes the interconversion of L-alanine and D-alanine. May also act on other amino acids. The polypeptide is Alanine racemase (alr) (Streptococcus mutans serotype c (strain ATCC 700610 / UA159)).